Consider the following 196-residue polypeptide: V-type proton ATPase subunit E (196 aa).

It belongs to the V-ATPase E subunit family.

Its function is as follows. Produces ATP from ADP in the presence of a proton gradient across the membrane. This chain is V-type proton ATPase subunit E, found in Clostridium botulinum (strain Alaska E43 / Type E3).